Reading from the N-terminus, the 397-residue chain is Na(+)/H(+) antiporter NhaA 3 (397 aa).

Helical transmembrane passes span 18 to 38 (AGGI…NSPF), 63 to 83 (LLLW…GLEL), 98 to 118 (IALP…IYWW), 129 to 149 (GWAI…ALLG), 158 to 178 (IFLT…IAFF), 181 to 201 (SKIS…LFIC), 207 to 224 (TTLR…VALL), 269 to 289 (VAFL…FIGM), 306 to 326 (LFFG…LFGW), 340 to 360 (GVAV…SLAF), and 373 to 393 (LGIV…LRSA).

Belongs to the NhaA Na(+)/H(+) (TC 2.A.33) antiporter family.

The protein localises to the cell inner membrane. It catalyses the reaction Na(+)(in) + 2 H(+)(out) = Na(+)(out) + 2 H(+)(in). In terms of biological role, na(+)/H(+) antiporter that extrudes sodium in exchange for external protons. The chain is Na(+)/H(+) antiporter NhaA 3 from Saccharophagus degradans (strain 2-40 / ATCC 43961 / DSM 17024).